The primary structure comprises 1146 residues: Elicitor of plant defense protein 1 (1146 aa).

Disordered stretches follow at residues 25 to 75 (DPLP…RLSN) and 156 to 226 (ARPP…PRQG). Basic and acidic residues predominate over residues 164–177 (RAERIKAEDSDQSG). One can recognise a uDENN domain in the interval 246 to 500 (PLNTDPNMHP…NLCTEAFSPL (255 aa)). Residues 522-656 (VNEIPGSRTI…HRRKLHALLQ (135 aa)) form the cDENN domain. The dDENN domain occupies 658–1016 (AAPAKLRYGV…ERETKPGTTA (359 aa)). A disordered region spans residues 730–806 (LHSKVDPNKP…RRSSSFGVDK (77 aa)). The span at 732–743 (SKVDPNKPDRPG) shows a compositional bias: basic and acidic residues. Over residues 744 to 760 (TSKSTRTSPPSSVSPVS) the composition is skewed to low complexity. Over residues 769-783 (TPVSRSDSGFALTST) the composition is skewed to polar residues. A compositionally biased stretch (basic and acidic residues) spans 784-797 (LREKRSRNFDEKTR). The segment at 883 to 931 (GHCFNWEEGALSSSCSVCDDRAEGDGIYKCSGCSAFAHGRCLGCVSLAC) adopts a Phorbol-ester/DAG-type zinc-finger fold. A disordered region spans residues 1121–1146 (PRPEQRGTRGLVRKQVPSMLGTSPTN).

This sequence belongs to the EPD1 elicitor family. As to quaternary structure, interacts with host cotton EIR5A (AC A0A5J5T2N2) and EIR5D (AC A0A5J5NT52) and host N.benthamiana EIR (AC P0DXJ0).

The protein resides in the secreted. Its subcellular location is the host cell. Its function is as follows. Acts as an elicitor that triggers defense responses in both Nicotiana benthamiana and cotton plants. Triggers the accumulation of reactive oxygen species (ROS) and the activation of cell death in cotton plants. Induces significantly enhanced resistance of Nicotiana benthamiana to both the broad-host-range filamentous pathogen Botrytis cinerea and the semibiotrophic pathogen Phytophthora capsici. Stimulates the expression of EIR5A (AC A0A5J5T2N2) and EIR5D (AC A0A5J5NT52) in cotton plants and recognition of EPD1 potentiates EIRs to enhance cotton PAMP-triggered immunity (PTI). This Verticillium dahliae (strain VdLs.17 / ATCC MYA-4575 / FGSC 10137) (Verticillium wilt) protein is Elicitor of plant defense protein 1.